We begin with the raw amino-acid sequence, 346 residues long: Olfactory receptor 8G5 (346 aa).

At 1–60 (MIIYKQGITFLQKENNNTIHLNTMFFLSPAETHQRMAAENHSFVTKFILVGLTEKSELQL) the chain is on the extracellular side. Residues Asn16 and Asn40 are each glycosylated (N-linked (GlcNAc...) asparagine). The helical transmembrane segment at 61 to 81 (PLFLVFLGIYVVTVLGNLGMI) threads the bilayer. The Cytoplasmic segment spans residues 82-89 (TLIGLSSH). The helical transmembrane segment at 90–110 (LHTPMYCFLSSLSFIDFCHST) threads the bilayer. Residues 111 to 134 (VITPKMLVNFVTEKNIISYPECMT) lie on the Extracellular side of the membrane. Cys132 and Cys214 form a disulfide bridge. Residues 135-155 (QLYFFLVFAIAECHMLAAMAY) form a helical membrane-spanning segment. The Cytoplasmic portion of the chain corresponds to 156-174 (DGYVAICSPLLYSIIISNK). The helical transmembrane segment at 175-195 (ACFSLILVVYVIGLICASAHI) threads the bilayer. Residues 196–232 (GCMFRVQFCKFDVINHYFCDLISILKLSCSSTYINEL) lie on the Extracellular side of the membrane. A helical transmembrane segment spans residues 233-252 (LILIFSGINILVPSLTILSS). Topologically, residues 253–272 (YIFIIASILRIRYTEGRSKA) are cytoplasmic. A helical transmembrane segment spans residues 273-293 (FSTCSSHISAVSVFFGSAAFM). The Extracellular segment spans residues 294–306 (YLQPSSVSSMDQG). The helical transmembrane segment at 307–327 (KVSSVFYTIVVPMLNPLIYSL) threads the bilayer. At 328–346 (RNKDVHVALKKTLGKRTFL) the chain is on the cytoplasmic side.

It belongs to the G-protein coupled receptor 1 family.

It localises to the cell membrane. Functionally, odorant receptor. The protein is Olfactory receptor 8G5 (OR8G5) of Homo sapiens (Human).